A 96-amino-acid polypeptide reads, in one-letter code: uncharacterized protein (96 aa).

This is an uncharacterized protein from Bacillus subtilis (strain 168).